The chain runs to 377 residues: Progesterone receptor (377 aa).

The interval 1 to 15 is modulating, Pro-Rich; that stretch reads EASQSPQYSFESLPQ. The nuclear receptor DNA-binding region spans 16-90; it reads KICLICGDEA…AGMVLGGRKF (75 aa). NR C4-type zinc fingers lie at residues 18-38 and 54-78; these read CLIC…CGSC and CAGR…LRKC. At S127 the chain carries Phosphoserine. Residues 130–364 enclose the NR LBD domain; the sequence is QDLQLIPPLI…EFPEMMSEVI (235 aa). Residues 138–377 are AF2; mediates transcriptional activation; the sequence is LINLLMSIEP…LPKILAGMVK (240 aa).

This sequence belongs to the nuclear hormone receptor family. NR3 subfamily. Interacts with CUEDC2, SMARD1 and with UNC45A. Interacts with PRMT2. Interacts with NCOA2 and NCOA1. Interacts with KLF9. Interacts with GTF2B. In terms of processing, palmitoylated by ZDHHC7 and ZDHHC21. Palmitoylation is required for plasma membrane targeting and for rapid intracellular signaling via ERK and AKT kinases and cAMP generation.

It localises to the nucleus. Its function is as follows. The steroid hormones and their receptors are involved in the regulation of eukaryotic gene expression and affect cellular proliferation and differentiation in target tissues. Transcriptional activator of several progesteron-dependent promoters in a variety of cell types. Involved in activation of SRC-dependent MAPK signaling on hormone stimulation. The sequence is that of Progesterone receptor (PGR) from Ovis aries (Sheep).